The following is a 627-amino-acid chain: Pro-interleukin-16 (627 aa).

3 disordered regions span residues 34 to 136, 162 to 267, and 316 to 337; these read HMPL…SIKQ, SSGE…LTRS, and GASP…ETSG. Residue Ser217 is modified to Phosphoserine. Positions 318 to 337 are enriched in polar residues; the sequence is SPTSLSNEDSAANGCAETSG. The tract at residues 401 to 497 is interaction with PPP1R12A, PPP1R12B and PPP1R12C; sequence KQLDSIHVTI…IVTRKLTPET (97 aa). PDZ domains lie at 407 to 492 and 529 to 614; these read HVTI…VTRK and TVTL…IKRK.

As to quaternary structure, homotetramer. Pro-interleukin-16 interacts (via PDZ 2 domain) with PPP1R12A, PPP1R12B and PPP1R12C. Pro-interleukin-16 interacts with GRIN2A. Pro-interleukin-16 interacts with GABPB1. Pro-interleukin-16 interacts (via PDZ 3 domain) with HDAC3.

Its subcellular location is the secreted. It is found in the cytoplasm. The protein localises to the nucleus. Its function is as follows. Interleukin-16 stimulates a migratory response in CD4+ lymphocytes, monocytes, and eosinophils. Primes CD4+ T-cells for IL-2 and IL-15 responsiveness. Also induces T-lymphocyte expression of interleukin 2 receptor. Ligand for CD4. Pro-interleukin-16 is involved in cell cycle progression in T-cells. Appears to be involved in transcriptional regulation of SKP2 and is probably part of a transcriptional repression complex on the core promoter of the SKP2 gene. May act as a scaffold for GABPB1 (the DNA-binding subunit the GABP transcription factor complex) and HDAC3 thus maintaining transcriptional repression and blocking cell cycle progression in resting T-cells. This Saimiri sciureus (Common squirrel monkey) protein is Pro-interleukin-16 (IL16).